The following is a 174-amino-acid chain: 3-hydroxyanthranilate 3,4-dioxygenase (174 aa).

Arg47 lines the O2 pocket. Fe cation is bound by residues His51, Glu57, and His95. Residue Glu57 coordinates substrate. Positions 99 and 110 each coordinate substrate. Fe cation-binding residues include Cys125, Cys128, Cys162, and Cys165.

Belongs to the 3-HAO family. In terms of assembly, homodimer. Requires Fe(2+) as cofactor.

It catalyses the reaction 3-hydroxyanthranilate + O2 = (2Z,4Z)-2-amino-3-carboxymuconate 6-semialdehyde. It participates in cofactor biosynthesis; NAD(+) biosynthesis; quinolinate from L-kynurenine: step 3/3. In terms of biological role, catalyzes the oxidative ring opening of 3-hydroxyanthranilate to 2-amino-3-carboxymuconate semialdehyde, which spontaneously cyclizes to quinolinate. In Paraburkholderia phytofirmans (strain DSM 17436 / LMG 22146 / PsJN) (Burkholderia phytofirmans), this protein is 3-hydroxyanthranilate 3,4-dioxygenase.